Here is a 445-residue protein sequence, read N- to C-terminus: MDSSYGATKFLLLLFLTTSIATALPDNKPVPGQINSNSVLVALLDSHYTELAELVEKALLLQTLEEAVGKHNITIFAPRNDALERNLDPLFKSFLLEPRNLKSLQSLLMFHILPKRITSPQWPSLSHHHRTLSNDHLHLTVDVNTLKVDSAEIIRPDDVIRPDGIIHGIERLLIPRSVQEDFNRRRSLRSISAVIPEGAPEVDPRTHRLKKPSPAVPAGAPPVLPIYDAMSPGPSLAPAPAPGPGGPRGHFNGDAQVKDFIHTLLHYGGYNEMADILVNLTSLATEMGRLVSEGYVLTVLAPNDEAMAKLTTDQLSEPGAPEQIMYYHIIPEYQTEESMYNAVRRFGKVKYDSLRFPHKVLAQEADGSVKFGHGDGSAYLFDPDIYTDGRISVQGIDGVLFPKEETPATEIKPAAPVVKKVSKSRRGKLMEVACRMMGSRFIPCQ.

An N-terminal signal peptide occupies residues 1 to 23 (MDSSYGATKFLLLLFLTTSIATA). FAS1 domains are found at residues 35 to 173 (NSNS…ERLL) and 257 to 400 (VKDF…DGVL). N-linked (GlcNAc...) asparagine glycans are attached at residues asparagine 72 and asparagine 279.

This sequence belongs to the fasciclin-like AGP family.

The protein resides in the secreted. Its function is as follows. May be a cell surface adhesion protein. The protein is Fasciclin-like arabinogalactan protein 16 (FLA16) of Arabidopsis thaliana (Mouse-ear cress).